Reading from the N-terminus, the 353-residue chain is Immune-associated nucleotide-binding protein 8 (353 aa).

Residues 1-10 (MANDQKNSES) are compositionally biased toward polar residues. The segment at 1–43 (MANDQKNSESFPAKEDHKKDDAAAPAEVDHKDEFSASQPHPVE) is disordered. The segment covering 12 to 34 (PAKEDHKKDDAAAPAEVDHKDEF) has biased composition (basic and acidic residues). An AIG1-type G domain is found at 40 to 248 (HPVENIVLVG…YTDEMYHMIK (209 aa)). A G1 region spans residues 49-56 (GRTGNGKS). Residues 49 to 57 (GRTGNGKSA) and serine 70 contribute to the GTP site. The G2 stretch occupies residues 76–80 (GVTME). Residues 98-101 (DTPG) form a G3 region. The tract at residues 168 to 171 (TGGD) is G4. The tract at residues 207–209 (DNK) is G5. Asparagine 208 contacts GTP. Positions 244–291 (YHMIKEENERHKKEQEELESKGHSEEQLAALMKELQIMNERNLKAMAE) form a coiled coil.

The protein belongs to the TRAFAC class TrmE-Era-EngA-EngB-Septin-like GTPase superfamily. AIG1/Toc34/Toc159-like paraseptin GTPase family. IAN subfamily. In terms of tissue distribution, mainly expressed in leaves.

This chain is Immune-associated nucleotide-binding protein 8, found in Arabidopsis thaliana (Mouse-ear cress).